The following is a 601-amino-acid chain: MSDTDPTTATDDTLRTPIVAVLGHVDHGKTSLLDKIRGSAVTAGESGAITQHIGATAVPLDVISEIAGDLVDPTDFDLPGLLFIDTPGHHSFSTLRSRGGALADIAILVVDVNDGFQPQTLEAIDILKRTQTPFIVAANKIDTVPGWNPNEGQPVQQTMDAQSDRVQSDLNEKLYEIIGELSDNGFSADMYWRVQNFQANIGVVPVSAETSEGIPDLLTVMMGLSQRYMKEEMEIDTSGPGVGTVLEVKDTQGFGTTLDAIIYDGTIRNDDTIVVGGLQGPIITDVRALLRPRPLEEIRTEQEFEQVDEVAAADGVKIAAPELGDAMAGAPIRVIRDRDRSEVIAEVEEELAEIEVTTQEEGVVIKADTLGSLEALSSTLEEEEIPVMRAEVGAVAPRDVRVAETAGESTNQAILAFSVDVLDDARDLAEQEDVKLFEDDVIYQLVESYDDHVTAIEEAQQEQILENITRPAKFRILQDHTFRQSDPAVVGVEILSGELRRNVNVVRWENGEANRVGTLKTIQDEGEDVDSARAGERMAVSIQGPTVGRQVEEGDDLWVEIPEKHAKILEQELKEDISVDEREALSMYLEKHRNRDPFWGK.

The 216-residue stretch at 14–229 (LRTPIVAVLG…VMMGLSQRYM (216 aa)) folds into the tr-type G domain. Positions 23-30 (GHVDHGKT) are G1. 23-30 (GHVDHGKT) serves as a coordination point for GTP. Residues 48-52 (AITQH) are G2. Residues 85–88 (DTPG) are G3. Residues 85 to 89 (DTPGH) and 139 to 142 (NKID) contribute to the GTP site. Residues 139–142 (NKID) are G4. The segment at 207–209 (SAE) is G5.

The protein belongs to the TRAFAC class translation factor GTPase superfamily. Classic translation factor GTPase family. IF-2 subfamily.

Functionally, function in general translation initiation by promoting the binding of the formylmethionine-tRNA to ribosomes. Seems to function along with eIF-2. In Haloarcula marismortui (strain ATCC 43049 / DSM 3752 / JCM 8966 / VKM B-1809) (Halobacterium marismortui), this protein is Probable translation initiation factor IF-2.